The chain runs to 138 residues: ATP synthase epsilon chain (138 aa).

Belongs to the ATPase epsilon chain family. F-type ATPases have 2 components, CF(1) - the catalytic core - and CF(0) - the membrane proton channel. CF(1) has five subunits: alpha(3), beta(3), gamma(1), delta(1), epsilon(1). CF(0) has three main subunits: a, b and c.

It localises to the cell inner membrane. Produces ATP from ADP in the presence of a proton gradient across the membrane. The sequence is that of ATP synthase epsilon chain from Cupriavidus metallidurans (strain ATCC 43123 / DSM 2839 / NBRC 102507 / CH34) (Ralstonia metallidurans).